We begin with the raw amino-acid sequence, 204 residues long: Protein LURP-one-related 14 (204 aa).

The protein belongs to the LOR family.

In terms of biological role, might be related to the phospholipid scramblase and tubby-like superfamily of membrane tethered transcription factors. This is Protein LURP-one-related 14 from Arabidopsis thaliana (Mouse-ear cress).